The chain runs to 369 residues: tRNA(Met) cytidine acetate ligase (369 aa).

ATP-binding positions include 7–20 (VAEF…HKYL), Gly-96, Asn-152, and Arg-175.

It belongs to the TmcAL family.

Its subcellular location is the cytoplasm. The enzyme catalyses cytidine(34) in elongator tRNA(Met) + acetate + ATP = N(4)-acetylcytidine(34) in elongator tRNA(Met) + AMP + diphosphate. Its function is as follows. Catalyzes the formation of N(4)-acetylcytidine (ac(4)C) at the wobble position of elongator tRNA(Met), using acetate and ATP as substrates. First activates an acetate ion to form acetyladenylate (Ac-AMP) and then transfers the acetyl group to tRNA to form ac(4)C34. This chain is tRNA(Met) cytidine acetate ligase, found in Streptococcus agalactiae serotype Ia (strain ATCC 27591 / A909 / CDC SS700).